Consider the following 96-residue polypeptide: MEQPPEDQGPQREPYNEWTLELLEELKNEAVRHFPREYLHGLGQYIYNTYGDTWRGVETMIRILQQLLFIHFRIGCHHSRIGIIRQRRLRNGSSRS.

The tract at residues 1–42 (MEQPPEDQGPQREPYNEWTLELLEELKNEAVRHFPREYLHGL) is homooligomerization. Ser79, Ser94, and Ser96 each carry phosphoserine; by host.

This sequence belongs to the HIV-1 VPR protein family. Homooligomer, may form homodimer. Interacts with p6-gag region of the Pr55 Gag precursor protein through a (Leu-X-X)4 motif near the C-terminus of the P6gag protein. Interacts with host UNG. May interact with host RAD23A/HHR23A. Interacts with host VPRBP/DCAF1, leading to hijack the CUL4A-RBX1-DDB1-DCAF1/VPRBP complex, mediating ubiquitination of host proteins such as TERT and ZGPAT and arrest of the cell cycle in G2 phase. Phosphorylated on several residues by host. These phosphorylations regulate VPR activity for the nuclear import of the HIV-1 pre-integration complex.

It is found in the virion. The protein localises to the host nucleus. The protein resides in the host extracellular space. Its function is as follows. During virus replication, may deplete host UNG protein, and incude G2-M cell cycle arrest. Acts by targeting specific host proteins for degradation by the 26S proteasome, through association with the cellular CUL4A-DDB1 E3 ligase complex by direct interaction with host VPRPB/DCAF-1. Cell cycle arrest reportedly occurs within hours of infection and is not blocked by antiviral agents, suggesting that it is initiated by the VPR carried into the virion. Additionally, VPR induces apoptosis in a cell cycle dependent manner suggesting that these two effects are mechanistically linked. Detected in the serum and cerebrospinal fluid of AIDS patient, VPR may also induce cell death to bystander cells. In terms of biological role, during virus entry, plays a role in the transport of the viral pre-integration (PIC) complex to the host nucleus. This function is crucial for viral infection of non-dividing macrophages. May act directly at the nuclear pore complex, by binding nucleoporins phenylalanine-glycine (FG)-repeat regions. The chain is Protein Vpr from Homo sapiens (Human).